A 134-amino-acid polypeptide reads, in one-letter code: Transcription antitermination protein NusB (134 aa).

This sequence belongs to the NusB family.

Functionally, involved in transcription antitermination. Required for transcription of ribosomal RNA (rRNA) genes. Binds specifically to the boxA antiterminator sequence of the ribosomal RNA (rrn) operons. The chain is Transcription antitermination protein NusB from Shewanella baltica (strain OS223).